We begin with the raw amino-acid sequence, 195 residues long: Cysteine/O-acetylserine efflux protein (195 aa).

Over 1–7 (MTPTLLS) the chain is Periplasmic. The helical transmembrane segment at 8-28 (AFWTYTLITAMTPGPNNILAL) threads the bilayer. The Cytoplasmic portion of the chain corresponds to 29 to 46 (SSATSHGFRQSTRVLAGM). Residues 47-67 (SLGFLIVMLLCAGISFSLAVI) form a helical membrane-spanning segment. The Periplasmic segment spans residues 68–69 (DP). The helical transmembrane segment at 70-90 (AAVHLLSWAGAAYIVWLAWKI) threads the bilayer. Over 91–104 (ATSPTKEDGLQTKP) the chain is Cytoplasmic. A helical transmembrane segment spans residues 105 to 125 (ISFWASFALQFVNVKIILYGV). The Periplasmic segment spans residues 126–141 (TALSTFVLPQTQALSW). The helical transmembrane segment at 142–162 (VVGVSVLLAMIGTFGNVCWAL) threads the bilayer. Topologically, residues 163–176 (AGHLFQRLFRQYGR) are cytoplasmic. The helical transmembrane segment at 177–194 (QLNIVLALLLVYCAVRIF) threads the bilayer. Position 195 (Tyr195) is a topological domain, periplasmic.

Belongs to the Rht family.

The protein localises to the cell inner membrane. It catalyses the reaction O-acetyl-L-serine(in) = O-acetyl-L-serine(out). The enzyme catalyses L-cysteine(in) = L-cysteine(out). Exporter of O-acetylserine (OAS) and cysteine. This Escherichia coli O1:K1 / APEC protein is Cysteine/O-acetylserine efflux protein (eamB).